The chain runs to 1792 residues: MNSIKLKFNCKDSLWQEHIGAGDFSFAAIFLTTWGIVLRAYLDTDDVFFEYGLSRCEPVSQRDGIDELVPDRPFNLKFDGSMTVKDTIRRADSVVYGTPLVQDGLEHETHRETDPKRETFYSTCMLFLDGPKSPIDADVVEGTILDDIEFEMKPVVNYDMVVYVLSGKVCYLSYNVTRVSDDQAAHVAATFETVAKCIADVPHRLVQEVESLSQLDVDRLKTWNAYQPIAVETCYQDLFRQRCDLHPNSPAVIAWDGSFTYDELDHFSSLLATRLQAAGIGPDVFVTICATRCRWIPVAMLGIIKARGAFCALDLSHPLDRLKDICDALKSTITITTPTDSNIARKLASTVIVIGGDAPVESDRITPMNDRPKPINGHPTNALYSVFTSGSSGKPKGVVVEHRSFVSSALASIQPLDIRPHDRVLHFSAYAFDISVFEVLTPLISGATIAIPSEKRRKESLTHAVQELGATWALLTPTVARLYDPDEFPSLRTLALGGELAQASDIALWQSKNVVVIYNPAECCPIGVSGPACPADGKFLGWSHTCQRAWIVDPRDHDKLPPIGAVGELLIEGPVVARCYAHDPNFSSPDSPFIQSTPSWMLRLRSNTPSGTRLYRTGDLARYGSDASLYYMGRKDSQIKIRGQRTEPGEIESNLHSILSKDKLGVAIVVLELRGSSKIIAFVSKDTGGLGGDSNTVGQLRIEAATEETDVCITKATSKLHSIMPAYMVPSAFLSVNYIPISRSGKIDRTRLKSFALSLPQETLLRVNNGLETGDLPESNEEHRLQRMYSLVLGISRDKVGMESDFFRLGGDSLQAMKLLALAPKEGLTDISYEDIFRYPRLKDLARKASQSVTIKKDGFGENSSVIHPFSLVIDGQSLIDMAAKQCDIERDSIEDIYPCTPMQASIISLAVKGKIMPFLTFGLALRDHVDTKRVKDTWHAAYRANSLLRTRIIVCAETGQLYQVVVGGDIFWDDDECGNFAQPKSGPSASIGGPLVRMKLVEGQLSIAIHRALYDNWSIRQLLNDISGAYNGLTLPSRPSFNCYVSYAARSLEAASSFCNAELGDSDLDAAKYPEPVSQNSHTNFRAWLGIRVFTCQKESIDVLASEFQLAWAMIAYARTNKKDVVFGVLSSGRSNASKDTKEIMGPIATVTPLRVTIDGTQDVGGALEELQYRQEEQAMYTHLGLRRIGQLGRNAAAACQIQTVLIVEPDLPDLRGVWFSNDATLPNHSDADASNYRLTIKCVVGPDCTDIFAIFDHQSLPIMEVKEILSQFEHILGQIHGKEASQLSVASIDTVNFKDWDTLHKLTEMPSVCRNGLLLSDPTILPQGQMKTFSAVEEAAAHCAFQDSLQEASIARDAKMQPKEPLSSADLISEINRYDLAIMRSRPSPESILLSELALTGDSHSSGTHTVFVTGANGFIGTQILRHCLEDPTIDRVIALVRGSSANEARSRTEESARRAQWWSDCHSQKLEVWPGDLAMPHLGLNETHWRRLADRTTINAIIHNGASVHWLKRYADLEATNVGATAQLLQLAVANPRLGFVYVSSGRYTDPNAESEEPAAANVAATAMPYSQTKFVAESLIRRTAARLPHGQTQVRIISLGLVIGDPLTGVVNADDYLWRLIATCVQAGEFNSSAGSEWMPISDVTSTALAIVQTALNPAGVPATIKPITGGLMWSEIWDLVTDMGYDMEPRPESEWMATVRRDLEREQERHPLWTLSHLVESRSQLNTDAGAGPAWADAWRGDEATTRNLKTAFRRSLRFLGEVGFLPGQKGQNTDGEVNGRAFTRAW.

The interval 239 to 642 (FRQRCDLHPN…GRKDSQIKIR (404 aa)) is adenylation (A) domain. Residues 779-853 (SNEEHRLQRM…DLARKASQSV (75 aa)) enclose the Carrier domain. Ser813 is modified (O-(pantetheine 4'-phosphoryl)serine). The segment at 895-1285 (EDIYPCTPMQ…HILGQIHGKE (391 aa)) is condensation (C) domain. Residues 1415-1640 (VTGANGFIGT…AGEFNSSAGS (226 aa)) form a reductase (R) domain region.

Belongs to the NRP synthetase family.

It functions in the pathway alkaloid biosynthesis; ergot alkaloid biosynthesis. Its function is as follows. D-lysergyl-peptide-synthetase subunit 3; part of the gene cluster that mediates the biosynthesis of fungal ergot alkaloid. DmaW catalyzes the first step of ergot alkaloid biosynthesis by condensing dimethylallyl diphosphate (DMAP) and tryptophan to form 4-dimethylallyl-L-tryptophan. The second step is catalyzed by the methyltransferase easF that methylates 4-dimethylallyl-L-tryptophan in the presence of S-adenosyl-L-methionine, resulting in the formation of 4-dimethylallyl-L-abrine. The catalase easC and the FAD-dependent oxidoreductase easE then transform 4-dimethylallyl-L-abrine to chanoclavine-I which is further oxidized by easD in the presence of NAD(+), resulting in the formation of chanoclavine-I aldehyde. Agroclavine dehydrogenase easG then mediates the conversion of chanoclavine-I aldehyde to agroclavine via a non-enzymatic adduct reaction: the substrate is an iminium intermediate that is formed spontaneously from chanoclavine-I aldehyde in the presence of glutathione. The presence of easA is not required to complete this reaction. Further conversion of agroclavine to paspalic acid is a two-step process involving oxidation of agroclavine to elymoclavine and of elymoclavine to paspalic acid, the second step being performed by the elymoclavine oxidase cloA. Paspalic acid is then further converted to D-lysergic acid. Ergopeptines are assembled from D-lysergic acid and three different amino acids by the D-lysergyl-peptide-synthetases composed each of a monomudular and a trimodular nonribosomal peptide synthetase subunit. LpsB and lpsC encode the monomodular subunits responsible for D-lysergic acid activation and incorporation into the ergopeptine backbone. LpsA1 and A2 subunits encode the trimodular nonribosomal peptide synthetase assembling the tripeptide portion of ergopeptines. LpsA1 is responsible for formation of the major ergopeptine, ergotamine, and lpsA2 for alpha-ergocryptine, the minor ergopeptine of the total alkaloid mixture elaborated by C.purpurea. D-lysergyl-tripeptides are assembled by the nonribosomal peptide synthetases and released as N-(D-lysergyl-aminoacyl)-lactams. Cyclolization of the D-lysergyl-tripeptides is performed by the Fe(2+)/2-ketoglutarate-dependent dioxygenase easH which introduces a hydroxyl group into N-(D-lysergyl-aminoacyl)-lactam at alpha-C of the aminoacyl residue followed by spontaneous condensation with the terminal lactam carbonyl group. This is D-lysergyl-peptide-synthetase subunit 3 from Claviceps purpurea (strain 20.1) (Ergot fungus).